The primary structure comprises 381 residues: Cyclin-dependent kinase inhibitor CIP1 (381 aa).

Positions methionine 1 to histidine 11 are enriched in basic residues. Positions methionine 1–aspartate 30 are disordered. The segment covering arginine 17–aspartate 30 has biased composition (basic and acidic residues). 3 positions are modified to phosphothreonine: threonine 65, threonine 69, and threonine 73.

Interact with the CDC28/CLN2 complex. Post-translationally, phosphorylated during S phase in a CDC28-dependent manner. Phosphorylated at Thr-65 and Thr-73 by HOG1 under osmotic stress. The phosphorylations of Thr-65 and Thr-73 are necessary for CIP1-induced growth inhibition.

Its subcellular location is the cytoplasm. It is found in the nucleus. Acts as an inhibitor of the CDC28/CLN2 cyclin-dependent kinase complex. Stabilizes the CDC28 inhibitor SIC1. Negatively regulates the G1/S phase transition. Contributes to osmostress-induced transitory G1 delay. The sequence is that of Cyclin-dependent kinase inhibitor CIP1 from Saccharomyces cerevisiae (strain ATCC 204508 / S288c) (Baker's yeast).